The sequence spans 512 residues: Bifunctional purine biosynthesis protein PurH (512 aa).

One can recognise an MGS-like domain in the interval M1–V146.

The protein belongs to the PurH family.

The catalysed reaction is (6R)-10-formyltetrahydrofolate + 5-amino-1-(5-phospho-beta-D-ribosyl)imidazole-4-carboxamide = 5-formamido-1-(5-phospho-D-ribosyl)imidazole-4-carboxamide + (6S)-5,6,7,8-tetrahydrofolate. It catalyses the reaction IMP + H2O = 5-formamido-1-(5-phospho-D-ribosyl)imidazole-4-carboxamide. Its pathway is purine metabolism; IMP biosynthesis via de novo pathway; 5-formamido-1-(5-phospho-D-ribosyl)imidazole-4-carboxamide from 5-amino-1-(5-phospho-D-ribosyl)imidazole-4-carboxamide (10-formyl THF route): step 1/1. It participates in purine metabolism; IMP biosynthesis via de novo pathway; IMP from 5-formamido-1-(5-phospho-D-ribosyl)imidazole-4-carboxamide: step 1/1. The protein is Bifunctional purine biosynthesis protein PurH of Bacillus subtilis (strain 168).